The primary structure comprises 295 residues: Secreted frizzled-related protein 2 (295 aa).

Positions 1–24 are cleaved as a signal peptide; the sequence is MLQGPGSLLLLFLASHCCLGSARG. The region spanning 35-155 is the FZ domain; the sequence is YKRSNCKPIP…PQDNDLCIPL (121 aa). Intrachain disulfides connect cysteine 40–cysteine 103, cysteine 50–cysteine 96, cysteine 87–cysteine 125, cysteine 114–cysteine 152, cysteine 118–cysteine 142, cysteine 172–cysteine 245, cysteine 175–cysteine 247, and cysteine 190–cysteine 295. The 124-residue stretch at 172-295 folds into the NTR domain; the sequence is CEACKNKNDD…ISRSIRKLQC (124 aa).

This sequence belongs to the secreted frizzled-related protein (sFRP) family. Expressed in adipose tissue, heart, brain, skeletal muscle, pancreas, thymus, prostate, testis, ovary, small intestine and colon. Highest levels in adipose tissue, small intestine and colon.

It is found in the secreted. Functionally, soluble frizzled-related proteins (sFRPS) function as modulators of Wnt signaling through direct interaction with Wnts. They have a role in regulating cell growth and differentiation in specific cell types. SFRP2 may be important for eye retinal development and for myogenesis. This chain is Secreted frizzled-related protein 2 (SFRP2), found in Homo sapiens (Human).